The chain runs to 123 residues: Small ribosomal subunit protein uS12 (123 aa).

The residue at position 89 (Asp-89) is a 3-methylthioaspartic acid.

The protein belongs to the universal ribosomal protein uS12 family. Part of the 30S ribosomal subunit. Contacts proteins S8 and S17. May interact with IF1 in the 30S initiation complex.

Functionally, with S4 and S5 plays an important role in translational accuracy. Interacts with and stabilizes bases of the 16S rRNA that are involved in tRNA selection in the A site and with the mRNA backbone. Located at the interface of the 30S and 50S subunits, it traverses the body of the 30S subunit contacting proteins on the other side and probably holding the rRNA structure together. The combined cluster of proteins S8, S12 and S17 appears to hold together the shoulder and platform of the 30S subunit. The sequence is that of Small ribosomal subunit protein uS12 from Mesorhizobium japonicum (strain LMG 29417 / CECT 9101 / MAFF 303099) (Mesorhizobium loti (strain MAFF 303099)).